We begin with the raw amino-acid sequence, 417 residues long: Serine hydroxymethyltransferase 2 (417 aa).

(6S)-5,6,7,8-tetrahydrofolate-binding positions include Leu121 and 125–127; that span reads GHL. At Lys229 the chain carries N6-(pyridoxal phosphate)lysine. A (6S)-5,6,7,8-tetrahydrofolate-binding site is contributed by 354–356; the sequence is SPF.

This sequence belongs to the SHMT family. Homodimer. Pyridoxal 5'-phosphate serves as cofactor.

The protein resides in the cytoplasm. It catalyses the reaction (6R)-5,10-methylene-5,6,7,8-tetrahydrofolate + glycine + H2O = (6S)-5,6,7,8-tetrahydrofolate + L-serine. It participates in one-carbon metabolism; tetrahydrofolate interconversion. It functions in the pathway amino-acid biosynthesis; glycine biosynthesis; glycine from L-serine: step 1/1. Functionally, catalyzes the reversible interconversion of serine and glycine with tetrahydrofolate (THF) serving as the one-carbon carrier. This reaction serves as the major source of one-carbon groups required for the biosynthesis of purines, thymidylate, methionine, and other important biomolecules. Also exhibits THF-independent aldolase activity toward beta-hydroxyamino acids, producing glycine and aldehydes, via a retro-aldol mechanism. The polypeptide is Serine hydroxymethyltransferase 2 (Pseudomonas putida (strain ATCC 47054 / DSM 6125 / CFBP 8728 / NCIMB 11950 / KT2440)).